The chain runs to 434 residues: Ribitol-5-phosphate xylosyltransferase 1 (434 aa).

At 1–7 (MRFFRRK) the chain is on the cytoplasmic side. The helical; Signal-anchor for type II membrane protein transmembrane segment at 8–28 (IAIIVILAYAIFSLYAAYNVF) threads the bilayer. Topologically, residues 29-434 (FSKRVISRVH…VLEENFFKIT (406 aa)) are extracellular.

It belongs to the TMEM5 family.

The protein localises to the golgi apparatus membrane. It carries out the reaction 3-O-[Rib-ol-P-Rib-ol-P-3-beta-D-GalNAc-(1-&gt;3)-beta-D-GlcNAc-(1-&gt;4)-(O-6-P-alpha-D-Man)]-Thr-[protein] + UDP-alpha-D-xylose = 3-O-[beta-D-Xyl-(1-&gt;4)-Rib-ol-P-Rib-ol-P-3-beta-D-GalNAc-(1-&gt;3)-beta-D-GlcNAc-(1-&gt;4)-(O-6-P-alpha-D-Man)]-Thr-[protein] + UDP + H(+). Its pathway is protein modification; protein glycosylation. Functionally, acts as a UDP-D-xylose:ribitol-5-phosphate beta1,4-xylosyltransferase, which catalyzes the transfer of UDP-D-xylose to ribitol 5-phosphate (Rbo5P) to form the Xylbeta1-4Rbo5P linkage on O-mannosyl glycan. Participates in the biosynthesis of the phosphorylated O-mannosyl trisaccharide (N-acetylgalactosamine-beta-3-N-acetylglucosamine-beta-4-(phosphate-6-)mannose), a carbohydrate structure present in alpha-dystroglycan (DAG1), which is required for binding laminin G-like domain-containing extracellular proteins with high affinity. In Danio rerio (Zebrafish), this protein is Ribitol-5-phosphate xylosyltransferase 1 (rxylt1).